A 503-amino-acid chain; its full sequence is Potassium voltage-gated channel subfamily V member 1 (503 aa).

The Cytoplasmic segment spans residues 1 to 213 (MELLPPRGRA…EKPGSCTAAR (213 aa)). A helical membrane pass occupies residues 214-234 (IFGVISIIFVAVSIVNMALMS). At 235 to 246 (AELSWLDPQLLE) the chain is on the extracellular side. The helical transmembrane segment at 247-267 (ILEYVCISWFTGEFVLRFLCV) threads the bilayer. Topologically, residues 268 to 279 (RDRCRFLRKVPN) are cytoplasmic. Residues 280-300 (IIDLLAILPFYITLLVESLSG) form a helical membrane-spanning segment. At 301-312 (SQTTQELENVGR) the chain is on the extracellular side. The helical; Voltage-sensor transmembrane segment at 313 to 334 (IVQVLRLLRALRMLKLGRHSTG) threads the bilayer. At 335–348 (LRSLGMTITQCYEE) the chain is on the cytoplasmic side. The chain crosses the membrane as a helical span at residues 349-369 (VGLLLLFLSVGISIFSTVEYF). A Selectivity filter motif is present at residues 395–400 (TVGYGD). The helical transmembrane segment at 410-430 (IVAFMCILSGILVLALPIAII) threads the bilayer. Topologically, residues 431-503 (NDRFSACYFT…RSSGGDDFWF (73 aa)) are cytoplasmic.

Belongs to the potassium channel family. V (TC 1.A.1.2) subfamily. Kv8.1/KCNV1 sub-subfamily. As to quaternary structure, heteromultimer with KCNB1 and KCNB2. Interacts with KCNC4 and KCND1.

The protein resides in the cell membrane. Potassium channel subunit that does not form functional channels by itself. Modulates KCNB1 and KCNB2 channel activity by shifting the threshold for inactivation to more negative values and by slowing the rate of inactivation. Can down-regulate the channel activity of KCNB1, KCNB2, KCNC4 and KCND1, possibly by trapping them in intracellular membranes. The polypeptide is Potassium voltage-gated channel subfamily V member 1 (KCNV1) (Bos taurus (Bovine)).